A 155-amino-acid chain; its full sequence is Endoribonuclease YbeY (155 aa).

Zn(2+) contacts are provided by H114, H118, and H124.

Belongs to the endoribonuclease YbeY family. It depends on Zn(2+) as a cofactor.

It localises to the cytoplasm. Single strand-specific metallo-endoribonuclease involved in late-stage 70S ribosome quality control and in maturation of the 3' terminus of the 16S rRNA. This chain is Endoribonuclease YbeY, found in Cronobacter sakazakii (strain ATCC BAA-894) (Enterobacter sakazakii).